A 413-amino-acid polypeptide reads, in one-letter code: Arginine biosynthesis bifunctional protein ArgJ (413 aa).

Substrate contacts are provided by T154, K180, T191, E277, N408, and T413. Catalysis depends on T191, which acts as the Nucleophile.

The protein belongs to the ArgJ family. Heterotetramer of two alpha and two beta chains.

The protein resides in the cytoplasm. It carries out the reaction N(2)-acetyl-L-ornithine + L-glutamate = N-acetyl-L-glutamate + L-ornithine. It catalyses the reaction L-glutamate + acetyl-CoA = N-acetyl-L-glutamate + CoA + H(+). Its pathway is amino-acid biosynthesis; L-arginine biosynthesis; L-ornithine and N-acetyl-L-glutamate from L-glutamate and N(2)-acetyl-L-ornithine (cyclic): step 1/1. It participates in amino-acid biosynthesis; L-arginine biosynthesis; N(2)-acetyl-L-ornithine from L-glutamate: step 1/4. In terms of biological role, catalyzes two activities which are involved in the cyclic version of arginine biosynthesis: the synthesis of N-acetylglutamate from glutamate and acetyl-CoA as the acetyl donor, and of ornithine by transacetylation between N(2)-acetylornithine and glutamate. The polypeptide is Arginine biosynthesis bifunctional protein ArgJ (Synechocystis sp. (strain ATCC 27184 / PCC 6803 / Kazusa)).